The sequence spans 101 residues: MAKVSAVEKNKRREMMAKRYAARRARLKAIVMDQKVSLEERFKASIQLAELPRNSARVRVRNRCEVTGRPRAYYRKLQMSRIALRELGSLGHIPGVVKSSW.

The protein belongs to the universal ribosomal protein uS14 family. Part of the 30S ribosomal subunit. Contacts proteins S3 and S10.

Functionally, binds 16S rRNA, required for the assembly of 30S particles and may also be responsible for determining the conformation of the 16S rRNA at the A site. The protein is Small ribosomal subunit protein uS14 of Bartonella bacilliformis (strain ATCC 35685 / KC583 / Herrer 020/F12,63).